A 145-amino-acid chain; its full sequence is Sporulation-specific cell division protein Francci3_3418 (145 aa).

Belongs to the SsgA family.

Its subcellular location is the cell septum. In terms of biological role, involved in sporulation-specific cell division. The protein is Sporulation-specific cell division protein Francci3_3418 of Frankia casuarinae (strain DSM 45818 / CECT 9043 / HFP020203 / CcI3).